We begin with the raw amino-acid sequence, 238 residues long: Uridylate kinase (238 aa).

Residue 12-15 (KLSG) participates in ATP binding. Glycine 54 contacts UMP. The ATP site is built by glycine 55 and arginine 59. UMP contacts are provided by residues aspartate 74 and 135 to 142 (TGNPFFTT). Residues threonine 162, tyrosine 168, and aspartate 171 each contribute to the ATP site.

The protein belongs to the UMP kinase family. As to quaternary structure, homohexamer.

It is found in the cytoplasm. The catalysed reaction is UMP + ATP = UDP + ADP. The protein operates within pyrimidine metabolism; CTP biosynthesis via de novo pathway; UDP from UMP (UMPK route): step 1/1. With respect to regulation, inhibited by UTP. Catalyzes the reversible phosphorylation of UMP to UDP. In Bordetella bronchiseptica (strain ATCC BAA-588 / NCTC 13252 / RB50) (Alcaligenes bronchisepticus), this protein is Uridylate kinase.